Reading from the N-terminus, the 204-residue chain is Dual-action ribosomal maturation protein DarP (204 aa).

Disordered stretches follow at residues 1 to 31 and 182 to 204; these read MPPMTRKTRIQPIEPVAEEDDNGYDRPSKSQ and GGASDSDDEAADDAGDDHDDDEA. Positions 186–204 are enriched in acidic residues; it reads DSDDEAADDAGDDHDDDEA.

The protein belongs to the DarP family.

It is found in the cytoplasm. Member of a network of 50S ribosomal subunit biogenesis factors which assembles along the 30S-50S interface, preventing incorrect 23S rRNA structures from forming. Promotes peptidyl transferase center (PTC) maturation. The polypeptide is Dual-action ribosomal maturation protein DarP (Burkholderia orbicola (strain MC0-3)).